A 470-amino-acid chain; its full sequence is 24-hydroxycholesterol 7-alpha-hydroxylase (470 aa).

2 helical membrane-spanning segments follow: residues Ile-3–Phe-23 and Val-270–Ile-290. Cys-415 is a binding site for heme.

The protein belongs to the cytochrome P450 family. The cofactor is heme. As to expression, liver specific. Hepatic expression is sexually dimorphic (female &gt; male).

The protein resides in the endoplasmic reticulum membrane. The protein localises to the microsome membrane. The catalysed reaction is (24S)-hydroxycholesterol + reduced [NADPH--hemoprotein reductase] + O2 = (24S)-7alpha-dihydroxycholesterol + oxidized [NADPH--hemoprotein reductase] + H2O + H(+). It participates in steroid metabolism; cholesterol degradation. It functions in the pathway lipid metabolism; bile acid biosynthesis. In terms of biological role, a cytochrome P450 monooxygenase involved in neural cholesterol clearance through bile acid synthesis. Catalyzes 7-alpha hydroxylation of (24S)-hydroxycholesterol, a neural oxysterol that is metabolized to bile acids in the liver. Mechanistically, uses molecular oxygen inserting one oxygen atom into a substrate, and reducing the second into a water molecule, with two electrons provided by NADPH via cytochrome P450 reductase (CPR; NADPH-ferrihemoprotein reductase). This is 24-hydroxycholesterol 7-alpha-hydroxylase (Cyp39a1) from Mus musculus (Mouse).